The following is a 201-amino-acid chain: Cytochrome c biogenesis ATP-binding export protein CcmA (201 aa).

Positions 3 to 200 constitute an ABC transporter domain; that stretch reads LIAENLGGER…EGAELRMGVA (198 aa). 35–42 serves as a coordination point for ATP; it reads GPNGSGKS.

The protein belongs to the ABC transporter superfamily. CcmA exporter (TC 3.A.1.107) family. The complex is composed of two ATP-binding proteins (CcmA) and two transmembrane proteins (CcmB).

The protein localises to the cell inner membrane. It catalyses the reaction heme b(in) + ATP + H2O = heme b(out) + ADP + phosphate + H(+). Its function is as follows. Part of the ABC transporter complex CcmAB involved in the biogenesis of c-type cytochromes; once thought to export heme, this seems not to be the case, but its exact role is uncertain. Responsible for energy coupling to the transport system. This Mesorhizobium japonicum (strain LMG 29417 / CECT 9101 / MAFF 303099) (Mesorhizobium loti (strain MAFF 303099)) protein is Cytochrome c biogenesis ATP-binding export protein CcmA.